The primary structure comprises 232 residues: Flagellar L-ring protein (232 aa).

Positions 1–21 (MQKNAAHTYAISSLLVLSLTG) are cleaved as a signal peptide. C22 carries N-palmitoyl cysteine lipidation. Residue C22 is the site of S-diacylglycerol cysteine attachment.

Belongs to the FlgH family. In terms of assembly, the basal body constitutes a major portion of the flagellar organelle and consists of four rings (L,P,S, and M) mounted on a central rod.

The protein localises to the cell outer membrane. It localises to the bacterial flagellum basal body. Its function is as follows. Assembles around the rod to form the L-ring and probably protects the motor/basal body from shearing forces during rotation. The polypeptide is Flagellar L-ring protein (Shigella dysenteriae serotype 1 (strain Sd197)).